We begin with the raw amino-acid sequence, 550 residues long: Glucose-6-phosphate isomerase 2 (550 aa).

Residue Glu359 is the Proton donor of the active site. Catalysis depends on residues His390 and Lys514.

Belongs to the GPI family.

Its subcellular location is the cytoplasm. It carries out the reaction alpha-D-glucose 6-phosphate = beta-D-fructose 6-phosphate. The protein operates within carbohydrate biosynthesis; gluconeogenesis. It participates in carbohydrate degradation; glycolysis; D-glyceraldehyde 3-phosphate and glycerone phosphate from D-glucose: step 2/4. In terms of biological role, catalyzes the reversible isomerization of glucose-6-phosphate to fructose-6-phosphate. The polypeptide is Glucose-6-phosphate isomerase 2 (Streptomyces avermitilis (strain ATCC 31267 / DSM 46492 / JCM 5070 / NBRC 14893 / NCIMB 12804 / NRRL 8165 / MA-4680)).